The primary structure comprises 132 residues: MASPVTTNGKEPLVRKQKKSLSLPHDVLVSCLAHVSRLHYSILSLVLKNFRSLIASPELYKTRSLLGRIESCLYVCLRFPNESHPRWFTLYMKPNQIVANNKSNCNLLVPTPTISSSPAHWLCLIAVGSRIY.

In terms of domain architecture, F-box spans 17–63 (QKKSLSLPHDVLVSCLAHVSRLHYSILSLVLKNFRSLIASPELYKTR).

The sequence is that of Putative F-box protein At4g05620 from Arabidopsis thaliana (Mouse-ear cress).